A 201-amino-acid polypeptide reads, in one-letter code: Small ribosomal subunit protein uS4c (201 aa).

In terms of domain architecture, S4 RNA-binding spans 89 to 152 (MRLDNILFRL…NSRTLVQNLI (64 aa)).

This sequence belongs to the universal ribosomal protein uS4 family. Part of the 30S ribosomal subunit. Contacts protein S5. The interaction surface between S4 and S5 is involved in control of translational fidelity.

The protein localises to the plastid. It is found in the chloroplast. Functionally, one of the primary rRNA binding proteins, it binds directly to 16S rRNA where it nucleates assembly of the body of the 30S subunit. With S5 and S12 plays an important role in translational accuracy. This is Small ribosomal subunit protein uS4c (rps4) from Crucihimalaya wallichii (Rock-cress).